The following is a 315-amino-acid chain: Neuroguidin (315 aa).

Ala2 carries the post-translational modification N-acetylalanine. The stretch at 13–41 (SAVTLLKNLQEQVMAVTAQVKSLTQKVQA) forms a coiled coil. Residues 41-174 (AGAYPTEKGL…KGVSKKYVPP (134 aa)) are necessary for interaction with EIF4E. A phosphoserine mark is found at Ser121, Ser142, and Ser143. Residues 124-169 (ENDPLRFKPHPSNMMSKLSSEDEEEDEAEDDQSEASGKKSVKGVSK) are disordered. A compositionally biased stretch (acidic residues) spans 144–156 (EDEEEDEAEDDQS). Residues 181-205 (YDETEAEREKKRLERAKRRALSSSV) are a coiled coil. 2 positions are modified to phosphoserine: Ser204 and Ser214. Residues 277–315 (DISALTGGTVHLDEDQNPIKKRKKIPQKGRKKKGFRRRR) form a disordered region. Residues 295–315 (IKKRKKIPQKGRKKKGFRRRR) show a composition bias toward basic residues.

It belongs to the SAS10 family. In terms of assembly, part of the small subunit (SSU) processome, composed of more than 70 proteins and the RNA chaperone small nucleolar RNA (snoRNA) U3. Interacts with CPEB1 and EIF4E.

The protein resides in the nucleus. It localises to the nucleolus. The protein localises to the chromosome. Its subcellular location is the centromere. It is found in the cytoplasm. The protein resides in the cell projection. It localises to the axon. The protein localises to the dendrite. Its subcellular location is the filopodium. Its function is as follows. Part of the small subunit (SSU) processome, first precursor of the small eukaryotic ribosomal subunit. During the assembly of the SSU processome in the nucleolus, many ribosome biogenesis factors, an RNA chaperone and ribosomal proteins associate with the nascent pre-rRNA and work in concert to generate RNA folding, modifications, rearrangements and cleavage as well as targeted degradation of pre-ribosomal RNA by the RNA exosome. Its dissociation from the complex determines the transition from state pre-A1 to state pre-A1*. Inhibits mRNA translation in a cytoplasmic polyadenylation element (CPE)-dependent manner. The polypeptide is Neuroguidin (Homo sapiens (Human)).